Consider the following 260-residue polypeptide: MGDIVVIKCGGSVLDSLSDSFFTSVRRLQAEGAKPIIVHGGGPAINGMLAKLEVETTFVDGLRKTTDSVLSVAEMVLCGQTNKKVVRKLQKAGVKSIGLSGSDGELVRVKAIDEAILGYVGEPVHVNGELLHMLVADGFVPVLAPIGVNDEFEPYNVNADTVAGAVATALQAKELIFVTDVAGILKDDELVPALTPEEVESLIEEGTIYGGMIPKVRSAIHSLTGTLEAVSIVNGNDVFFAESGKLIGTTIKKQVIHSQG.

Substrate-binding positions include 41–42 (GG), R63, and N156.

The protein belongs to the acetylglutamate kinase family. ArgB subfamily.

The protein resides in the cytoplasm. The catalysed reaction is N-acetyl-L-glutamate + ATP = N-acetyl-L-glutamyl 5-phosphate + ADP. It participates in amino-acid biosynthesis; L-arginine biosynthesis; N(2)-acetyl-L-ornithine from L-glutamate: step 2/4. In terms of biological role, catalyzes the ATP-dependent phosphorylation of N-acetyl-L-glutamate. In Halalkalibacterium halodurans (strain ATCC BAA-125 / DSM 18197 / FERM 7344 / JCM 9153 / C-125) (Bacillus halodurans), this protein is Acetylglutamate kinase.